The chain runs to 531 residues: MDRSMFEIDHKKDEQLVSVEGYCKPGSDLIQGVQFKTNLRISEIIGFEKAIFGNPTTFSLAEDGKKIIGFHGYSMANLNSLGAYFTWISPTKMEAKGGKGGTEWNDGAEHEGFTKIYVQGGCDGIQYIKFDYVKDGQHKYGSPHGVKGSESTEPFEINHLDKEYLISVEGYYDEGDSGVIQGIQFKTNIKTSELIGDKKGRKFSLAANGKKIIGFHGYADKNLNSLGAYFTTSPLISLEHTTGSDLVNHIWDDGSFEGVRKVYVRYDSLEICYVEFDYDNKGKVEKREHGMFYSWVQQGEFVVDYPNEFITSVEGTMRTESFMQVASLTFKTSKGRTSSTFGSPSDSKFLLESKGCGVVGFYGRCFSSIFDLGAYFRPLPPPSNTEKVEAKGGDGGASWDDGGFDGIRNIYIGHNKMGIAFVKFLYDKDSQIVVGDDHGSNTLLRVDEFELEHPGEYLISVEGSYDVVDGSESEVIRMLRFKTNLRTSQLFGHETTPSFILEKECHKIVGFHGKIGKMLHQIGVNVLPITD.

Jacalin-type lectin domains follow at residues M1–W87, P90–T232, L235–P378, and T385–P528.

The protein belongs to the jacalin lectin family.

The protein is Jacalin-related lectin 16 (JAL16) of Arabidopsis thaliana (Mouse-ear cress).